The following is a 43-amino-acid chain: Snaclec lebecetin subunit beta (43 aa).

A C-type lectin domain is found at 1–43 (ALNCASGWSGGYDQHCYKVFDIPPSWAADEKFCKQQTSGGHLV). A disulfide bridge connects residues C4 and C16.

In terms of assembly, heterodimer of subunits alpha and beta; disulfide-linked. Requires Ca(2+) as cofactor. Glycosylated. In terms of tissue distribution, expressed by the venom gland.

The protein resides in the secreted. Its function is as follows. Binds to the platelet GPIb/IX/V receptor system and inhibits ristocetin-induced platelet aggregation in human platelet-rich plasma. Strongly inhibits platelet aggregation induced by ADP, calcium ionophore, thrombin and collagen. Does not inhibit U46619-induced platelet aggregation. The sequence is that of Snaclec lebecetin subunit beta from Macrovipera lebetinus (Levantine viper).